Consider the following 127-residue polypeptide: Succinate dehydrogenase cytochrome b560 subunit (127 aa).

Transmembrane regions (helical) follow at residues 36-53 (VGLA…RIIL) and 60-83 (NLLT…FILL). Heme is bound at residue histidine 88. A helical transmembrane segment spans residues 109-126 (LSKFSLFLLVSLSLILIF).

This sequence belongs to the cytochrome b560 family. In terms of assembly, forms part of complex II containing four subunits: a 70 kDa flavoprotein (FP), a 27 kDa iron-sulfur protein (IP), a cytochrome B and a membrane-anchoring protein. The cofactor is heme.

It is found in the mitochondrion inner membrane. Its pathway is carbohydrate metabolism; tricarboxylic acid cycle. Functionally, membrane-anchoring subunit of succinate dehydrogenase (SDH) that is involved in complex II of the mitochondrial electron transport chain and is responsible for transferring electrons from succinate to ubiquinone (coenzyme Q). The polypeptide is Succinate dehydrogenase cytochrome b560 subunit (SDH3) (Chondrus crispus (Carrageen Irish moss)).